The following is a 2198-amino-acid chain: MALPRLTGALRSFSNVTKQDNYNEEVADLKLKRSKLHEQVLDFGLTWKKIVKFLNEKLEKNKMQNINEDLKDILQAAKQIVGTDNGREAIESGAAFLFMTFHMTDSVGYMETKAIRQTFGPFPSSSATSACNATNRIISHFSQDDLTAFVQMAENPCNDRVVFGKNLAFSFDMYDLDHFDELPINGESQKTISLDYKKFLNEQFQEPYTPELKPVEKTNGSLLWCEVEKYLNATLKEMTEAARVEDLCCTLYDMLASAKSGDELQDELFELLGPEGLDLIEKLLQNRITIVDRFLNSSSDHKFQVLQDSCKKILGENSKPNYGCQVTIQSEQEKQLMKQYRREEKRIARREKKAGEDGEVSGEGVLPFDPKELRIQREHALLNARNAPILGRQRDVEFEKIRYPHVYDSQAQARETSAFIAGAKMILPEGIQRENTKLYEEVRIPYGEPMPVGFEEKPVYIKDLDEVGQLAFKGMKRLNRIQSIVFETAYNTNENMLICAPTGAGKTNIAMLTILHEIRQHFHQGVIKKNEFKIVYVAPMKALAAEMTNYFSKRLEPLGIVVKELTGDMQLSKSEILRTQMLVTTPEKWDVVTRKSVGDVALSQIVKLLILDEVHLLHEDRGPVLESIVARTLRQVESTQSMIRILGLSATLPNYLDVATFLHVNPYIGLFYFDGRFRPVPLGQTFLGIKSTNKMQQLNNMDEVCYESVLKQVKAGHQVMVFVHARNATVRTAMSLIERAKNSGQISCFLPTEGPEYGHALKQVQKSRNKQVRELFSDGFSIHHAGMLRQDRNLVENLFSNGHIKVLVCTATLAWGVNLPAHAVVIKGTQIYAAKRGSFVDLGILDVMQIFGRAGRPQFDKFGEGIIITTHDKLSHYLSLLTQQNPIESQFLESLADNLNAEIALGTVTNVEEAVRWMSYTYLYVRMRANPLAYGISHKAYQIDPTLRKHREQLLIEVGQKLDKAKMIRFEERTGYFSSTDLGRTASHFYIKYNTIETFNELFDAHKTEGDIFAIVSKAEEFDQIKVREEEIEELDALLNNFCELSAPGGVENSYGKINILLQTYISRGEMDSFSLISDSAYVAQNAARIVRALFEIALRKRWPTMTYRLLNLSKVIDKRLWGWASPLRQFSVLPPHILTRLEEKNLTVDKLKDMRKDEIGHILHHVNIGLKVKQCVHQIPSVTMEASIQPITRTVLRVSLNIHPDFSWNDQVHGTVGEPWWIWVEDPTNDHIYHSEYFLALKKQVINKEAQLLVFTIPIFEPLPSQYYIRAVSDRWLGAEAVCIINFQHLILPERHPPHTELLDLQPLPITALGCKAYEALYNFSHFNPVQTQIFHTLYHTDCNVLLGAPTGSGKTVAAELAIFRVFNKYPTSKAVYIAPLKALVRERMDDWKIRIEEKLGKKVIELTGDVTPDMKSIAKADLIVTTPEKWDGVSRSWQNRSYVQQVNILIIDEIHLLGEERGPVLEVIVSRTNFISSHTEKPVRIVGLSTALANARDLADWLNIKQMGLFNFRPSVRPVPLEVHIQGFPGQHYCPRMASMNKPAFQAIRSHSPAKPVLIFVSSRRQTRLTALELIAFLATEEDPKQWLNMDEQEMDNIIGTVRDSNLKLTLAFGIGMHHAGLHERDRKTVEELFVNCKVQVLIATSTLAWGVNFPAHLVIIKGTEYYDGKTRRYVDFPITDVLQMMGRAGRPQFDDQGKAVILVHDIKKDFYKKFLYEPFPVESSLLGVLSDHLNAEIAGGTITSKQDAMDYITWTYFFRRLIMNPSYYSLGDVSQDSINKFLSHLIGQSLVELELSHCIEVGEDNRTIEPLTCGRIASYYYLKHKTVKMFKDRLKPECSTEELLSILSDAEEYTDLPVRHNEDHTNNELAKCLPIELNPHSFDSPHTKAHLLLQAHLSRAMLPCPDYDTDTKTVLDQALRVCQAMLDVAASQGWLVTVLNITHLIQMVIQGRWLKDSSLLTIPNIEQHHLHLFRKWKPPVKSSHAKCRTSIECLPELIHACEGKDHVFSSMVEKELQPAKTKQAWNFLSRLPVINVGISVKGSWDDLVEGHNELSISTLTADKRDENKWIKLHADQEYVLQVSLQRVHFGLPKGKHENHAVTPRFPKLKDEGWFLILGEVDKRELMAVKRVGFVRTHHDASISFFTPETPGRYIFTLYLMSDCYLGLDQQYDIYLNVIKANISTKDSDVFTDLSV.

S12 is subject to Phosphoserine. 2 coiled-coil regions span residues 18–81 (KQDN…KQIV) and 328–356 (IQSEQEKQLMKQYRREEKRIARREKKAGE). Residues 487-670 (ETAYNTNENM…FLHVNPYIGL (184 aa)) form the Helicase ATP-binding 1 domain. 500–507 (APTGAGKT) is a binding site for ATP. N6-acetyllysine is present on K573. A DEVH box motif is present at residues 612–615 (DEVH). The region spanning 697 to 915 (QLNNMDEVCY…GTVTNVEEAV (219 aa)) is the Helicase C-terminal 1 domain. An SEC63 1 domain is found at 979–1288 (STDLGRTASH…GAEAVCIINF (310 aa)). The 176-residue stretch at 1337-1512 (HTLYHTDCNV…WLNIKQMGLF (176 aa)) folds into the Helicase ATP-binding 2 domain. An ATP-binding site is contributed by 1350 to 1357 (APTGSGKT). Residues 1454-1457 (DEIH) carry the DEIH box motif. The region spanning 1545–1740 (PAFQAIRSHS…VLSDHLNAEI (196 aa)) is the Helicase C-terminal 2 domain. The SEC63 2 domain occupies 1813–2177 (PLTCGRIASY…LGLDQQYDIY (365 aa)).

Belongs to the helicase family. As to quaternary structure, identified in the ASCC complex that contains ASCC1, ASCC2 and ASCC3. Functions as a scaffolding subunit that interacts directly with both ASCC1 and ASCC2. Interacts directly with ALKBH3, and thereby recruits ALKBH3 to the ASCC complex. Part of the ASC-1/TRIP4 complex, that contains TRIP4, ASCC1, ASCC2 and ASCC3. Part of the RQT (ribosome quality control trigger) complex, that contains ASCC2, ASCC3 and TRIP4. Associates with ribosomes; recruited to collided ribosomes. Interacts with ZCCHC4. Interacts with ZNF598. Interacts with RPS3.

The protein resides in the nucleus. It is found in the nucleus speckle. It localises to the cytoplasm. The protein localises to the cytosol. It catalyses the reaction Couples ATP hydrolysis with the unwinding of duplex DNA by translocating in the 3'-5' direction.. The enzyme catalyses ATP + H2O = ADP + phosphate + H(+). Functionally, ATPase involved both in DNA repair and rescue of stalled ribosomes. 3'-5' DNA helicase involved in repair of alkylated DNA: promotes DNA unwinding to generate single-stranded substrate needed for ALKBH3, enabling ALKBH3 to process alkylated N3-methylcytosine (3mC) within double-stranded regions. Also involved in activation of the ribosome quality control (RQC) pathway, a pathway that degrades nascent peptide chains during problematic translation. Drives the splitting of stalled ribosomes that are ubiquitinated in a ZNF598-dependent manner, as part of the ribosome quality control trigger (RQT) complex. Part of the ASC-1 complex that enhances NF-kappa-B, SRF and AP1 transactivation. The protein is Activating signal cointegrator 1 complex subunit 3 (Ascc3) of Mus musculus (Mouse).